The primary structure comprises 168 residues: Fusion protein P6 (168 aa).

4 helical membrane-spanning segments follow: residues 29-49, 52-72, 94-114, and 143-163; these read IWPL…AGFF, AGFT…TPTL, FQSL…ALIA, and ALPG…LWPS.

As to quaternary structure, interacts with P3.

It is found in the virion membrane. Functionally, mediates the fusion with the host outer membrane during virus entry into the host cell. This chain is Fusion protein P6 (P6), found in Pseudomonas savastanoi pv. phaseolicola (Pseudomonas syringae pv. phaseolicola).